The sequence spans 448 residues: Squalene synthase ERG9 (448 aa).

Residues 428 to 448 (CNVVLFGIGALILSLIYFVLY) traverse the membrane as a helical segment.

It belongs to the phytoene/squalene synthase family. The cofactor is Mg(2+).

The protein localises to the endoplasmic reticulum membrane. Its subcellular location is the microsome. The catalysed reaction is 2 (2E,6E)-farnesyl diphosphate + NADPH + H(+) = squalene + 2 diphosphate + NADP(+). It catalyses the reaction 2 (2E,6E)-farnesyl diphosphate + NADH + H(+) = squalene + 2 diphosphate + NAD(+). Its pathway is terpene metabolism; lanosterol biosynthesis; lanosterol from farnesyl diphosphate: step 1/3. Squalene synthase; part of the third module of ergosterol biosynthesis pathway that includes the late steps of the pathway. ERG9 produces squalene from 2 farnesyl pyrophosphate moieties. The third module or late pathway involves the ergosterol synthesis itself through consecutive reactions that mainly occur in the endoplasmic reticulum (ER) membrane. Firstly, the squalene synthase ERG9 catalyzes the condensation of 2 farnesyl pyrophosphate moieties to form squalene, which is the precursor of all steroids. Squalene synthase is crucial for balancing the incorporation of farnesyl diphosphate (FPP) into sterol and nonsterol isoprene synthesis. Secondly, the squalene epoxidase ERG1 catalyzes the stereospecific oxidation of squalene to (S)-2,3-epoxysqualene, which is considered to be a rate-limiting enzyme in steroid biosynthesis. Then, the lanosterol synthase ERG7 catalyzes the cyclization of (S)-2,3 oxidosqualene to lanosterol, a reaction that forms the sterol core. In the next steps, lanosterol is transformed to zymosterol through a complex process involving various demethylation, reduction and desaturation reactions. The lanosterol 14-alpha-demethylase ERG11 (also known as CYP51) catalyzes C14-demethylation of lanosterol to produce 4,4'-dimethyl cholesta-8,14,24-triene-3-beta-ol, which is critical for ergosterol biosynthesis. The C-14 reductase ERG24 reduces the C14=C15 double bond of 4,4-dimethyl-cholesta-8,14,24-trienol to produce 4,4-dimethyl-cholesta-8,24-dienol. 4,4-dimethyl-cholesta-8,24-dienol is substrate of the C-4 demethylation complex ERG25-ERG26-ERG27 in which ERG25 catalyzes the three-step monooxygenation required for the demethylation of 4,4-dimethyl and 4alpha-methylsterols, ERG26 catalyzes the oxidative decarboxylation that results in a reduction of the 3-beta-hydroxy group at the C-3 carbon to an oxo group, and ERG27 is responsible for the reduction of the keto group on the C-3. ERG28 has a role as a scaffold to help anchor ERG25, ERG26 and ERG27 to the endoplasmic reticulum and ERG29 regulates the activity of the iron-containing C4-methylsterol oxidase ERG25. Then, the sterol 24-C-methyltransferase ERG6 catalyzes the methyl transfer from S-adenosyl-methionine to the C-24 of zymosterol to form fecosterol. The C-8 sterol isomerase ERG2 catalyzes the reaction which results in unsaturation at C-7 in the B ring of sterols and thus converts fecosterol to episterol. The sterol-C5-desaturase ERG3 then catalyzes the introduction of a C-5 double bond in the B ring to produce 5-dehydroepisterol. The C-22 sterol desaturase ERG5 further converts 5-dehydroepisterol into ergosta-5,7,22,24(28)-tetraen-3beta-ol by forming the C-22(23) double bond in the sterol side chain. Finally, ergosta-5,7,22,24(28)-tetraen-3beta-ol is substrate of the C-24(28) sterol reductase ERG4 to produce ergosterol. The polypeptide is Squalene synthase ERG9 (Candida albicans (strain SC5314 / ATCC MYA-2876) (Yeast)).